A 202-amino-acid chain; its full sequence is Imidazoleglycerol-phosphate dehydratase (202 aa).

This sequence belongs to the imidazoleglycerol-phosphate dehydratase family.

It is found in the cytoplasm. The catalysed reaction is D-erythro-1-(imidazol-4-yl)glycerol 3-phosphate = 3-(imidazol-4-yl)-2-oxopropyl phosphate + H2O. It participates in amino-acid biosynthesis; L-histidine biosynthesis; L-histidine from 5-phospho-alpha-D-ribose 1-diphosphate: step 6/9. The protein is Imidazoleglycerol-phosphate dehydratase of Acinetobacter baumannii (strain AYE).